A 310-amino-acid polypeptide reads, in one-letter code: p-hydroxybenzoic acid efflux pump subunit AaeA (310 aa).

Residues 12–32 traverse the membrane as a helical segment; that stretch reads AITVVLVILAFIAIFNAWVYY.

The protein belongs to the membrane fusion protein (MFP) (TC 8.A.1) family.

It is found in the cell inner membrane. Its function is as follows. Forms an efflux pump with AaeB. The sequence is that of p-hydroxybenzoic acid efflux pump subunit AaeA from Escherichia coli O127:H6 (strain E2348/69 / EPEC).